The sequence spans 364 residues: Guanine nucleotide-binding protein alpha-8 subunit (364 aa).

Residue Gly-2 is the site of N-myristoyl glycine attachment. A lipid anchor (S-palmitoyl cysteine) is attached at Cys-5. Residues 38–364 (KILKLLILGP…QHTMQKVGIQ (327 aa)) enclose the G-alpha domain. The interval 41–54 (KLLILGPGESGKST) is G1 motif. GTP is bound by residues 46-53 (GPGESGKS), 186-192 (LKSRVPT), 211-215 (DVGGQ), 280-283 (NKID), and Ala-336. The Mg(2+) site is built by Ser-53 and Thr-192. The tract at residues 184–192 (DILKSRVPT) is G2 motif. Residues 207 to 216 (FRIFDVGGQR) form a G3 motif region. Residues 276–283 (ILFLNKID) form a G4 motif region. Residues 334–339 (TCATDT) are G5 motif.

This sequence belongs to the G-alpha family. G proteins are composed of 3 units; alpha, beta and gamma. The alpha chain contains the guanine nucleotide binding site.

In terms of biological role, guanine nucleotide-binding proteins (G proteins) are involved as modulators or transducers in various transmembrane signaling systems. This is Guanine nucleotide-binding protein alpha-8 subunit (gpa-8) from Caenorhabditis elegans.